Reading from the N-terminus, the 434-residue chain is D-inositol 3-phosphate glycosyltransferase (434 aa).

1D-myo-inositol 3-phosphate is bound at residue H19. Residues 25 to 26 (QP) and G33 contribute to the UDP-N-acetyl-alpha-D-glucosamine site. 1D-myo-inositol 3-phosphate-binding positions include 30–35 (DAGGMN), K88, Y121, T145, and R165. UDP-N-acetyl-alpha-D-glucosamine contacts are provided by R239, K244, and Q297. Y306, R307, and A309 together coordinate Mg(2+). UDP-N-acetyl-alpha-D-glucosamine contacts are provided by E319 and E327. T333 serves as a coordination point for Mg(2+). The disordered stretch occupies residues 414–434 (HPRPAARRSGRRFSMRRGVRT).

The protein belongs to the glycosyltransferase group 1 family. MshA subfamily. Homodimer.

It carries out the reaction 1D-myo-inositol 3-phosphate + UDP-N-acetyl-alpha-D-glucosamine = 1D-myo-inositol 2-acetamido-2-deoxy-alpha-D-glucopyranoside 3-phosphate + UDP + H(+). Functionally, catalyzes the transfer of a N-acetyl-glucosamine moiety to 1D-myo-inositol 3-phosphate to produce 1D-myo-inositol 2-acetamido-2-deoxy-glucopyranoside 3-phosphate in the mycothiol biosynthesis pathway. This chain is D-inositol 3-phosphate glycosyltransferase (mshA), found in Mycolicibacterium smegmatis (strain ATCC 700084 / mc(2)155) (Mycobacterium smegmatis).